The chain runs to 552 residues: Putative transport protein Spro_0050 (552 aa).

6 helical membrane passes run 4–24 (IALT…MGNW), 26–46 (IYGV…VGHF), 65–85 (FGLI…FFSS), 96–116 (FAIL…KLFA), 117–137 (VPLP…PALG), and 158–178 (MGYA…MWLI). 2 RCK C-terminal domains span residues 192–276 (AFAS…VIGE) and 279–361 (DVSL…IVGN). 6 helical membrane-spanning segments follow: residues 371–391 (MLPV…PLFI), 393–413 (GFPA…ALIL), 439–459 (IVLF…DTLI), 464–484 (LAWI…VGVL), 493–513 (YLTL…LAFA), and 530–550 (VYPL…VLFW).

It belongs to the AAE transporter (TC 2.A.81) family. YidE subfamily.

It localises to the cell membrane. This chain is Putative transport protein Spro_0050, found in Serratia proteamaculans (strain 568).